We begin with the raw amino-acid sequence, 277 residues long: Coiled-coil domain-containing protein 117 (277 aa).

The tract at residues 22-69 is disordered; that stretch reads SPPAFAGRAFPPGAAGHDLAPRPGVRGPPSSPDGRTARGRVSIHCRKK. Over residues 23-55 the composition is skewed to low complexity; it reads PPAFAGRAFPPGAAGHDLAPRPGVRGPPSSPDG. Arg47 carries the post-translational modification Omega-N-methylarginine. Residue Ser52 is modified to Phosphoserine. Basic residues predominate over residues 58–69; that stretch reads ARGRVSIHCRKK. Positions 139–166 form a coiled coil; that stretch reads QCEVARRRLQEIEDRIIDEDEEVESDRN. Disordered stretches follow at residues 216-242 and 255-277; these read LSEKPKPSSNPKNYMGESQTKHTATGT and QCTDTPLYHSLETAASTEEEMEL. Residues 225–242 are compositionally biased toward polar residues; it reads NPKNYMGESQTKHTATGT.

Interacts with CIAO2B; the interaction is direct. Interacts with MMS19; the interaction is indirect.

The protein resides in the cytoplasm. It localises to the cytoskeleton. Its subcellular location is the spindle. The protein localises to the nucleus. In terms of biological role, facilitates DNA repair, cell cycle progression, and cell proliferation through its interaction with CIAO2B. This is Coiled-coil domain-containing protein 117 from Rattus norvegicus (Rat).